Consider the following 216-residue polypeptide: Large ribosomal subunit protein eL15 (216 aa).

The span at 170-188 shows a compositional bias: basic residues; the sequence is RGLRKSKGFKGTVKHKWSR. The tract at residues 170–201 is disordered; that stretch reads RGLRKSKGFKGTVKHKWSRKQKEREEKKRHEA. Basic and acidic residues predominate over residues 189-201; sequence KQKEREEKKRHEA.

This sequence belongs to the eukaryotic ribosomal protein eL15 family.

The protein is Large ribosomal subunit protein eL15 of Saccharolobus islandicus (strain M.16.27) (Sulfolobus islandicus).